A 328-amino-acid chain; its full sequence is 4-hydroxy-3-methylbut-2-enyl diphosphate reductase (328 aa).

Cys13 provides a ligand contact to [4Fe-4S] cluster. His41 and His75 together coordinate (2E)-4-hydroxy-3-methylbut-2-enyl diphosphate. His41 and His75 together coordinate dimethylallyl diphosphate. Isopentenyl diphosphate-binding residues include His41 and His75. Position 97 (Cys97) interacts with [4Fe-4S] cluster. His125 serves as a coordination point for (2E)-4-hydroxy-3-methylbut-2-enyl diphosphate. Residue His125 coordinates dimethylallyl diphosphate. His125 provides a ligand contact to isopentenyl diphosphate. Glu127 functions as the Proton donor in the catalytic mechanism. Thr168 contributes to the (2E)-4-hydroxy-3-methylbut-2-enyl diphosphate binding site. A [4Fe-4S] cluster-binding site is contributed by Cys229. (2E)-4-hydroxy-3-methylbut-2-enyl diphosphate is bound by residues Ser257, Ser258, Asn259, and Ser306. Dimethylallyl diphosphate contacts are provided by Ser257, Ser258, Asn259, and Ser306. Ser257, Ser258, Asn259, and Ser306 together coordinate isopentenyl diphosphate.

The protein belongs to the IspH family. The cofactor is [4Fe-4S] cluster.

The catalysed reaction is isopentenyl diphosphate + 2 oxidized [2Fe-2S]-[ferredoxin] + H2O = (2E)-4-hydroxy-3-methylbut-2-enyl diphosphate + 2 reduced [2Fe-2S]-[ferredoxin] + 2 H(+). The enzyme catalyses dimethylallyl diphosphate + 2 oxidized [2Fe-2S]-[ferredoxin] + H2O = (2E)-4-hydroxy-3-methylbut-2-enyl diphosphate + 2 reduced [2Fe-2S]-[ferredoxin] + 2 H(+). It participates in isoprenoid biosynthesis; dimethylallyl diphosphate biosynthesis; dimethylallyl diphosphate from (2E)-4-hydroxy-3-methylbutenyl diphosphate: step 1/1. Its pathway is isoprenoid biosynthesis; isopentenyl diphosphate biosynthesis via DXP pathway; isopentenyl diphosphate from 1-deoxy-D-xylulose 5-phosphate: step 6/6. Functionally, catalyzes the conversion of 1-hydroxy-2-methyl-2-(E)-butenyl 4-diphosphate (HMBPP) into a mixture of isopentenyl diphosphate (IPP) and dimethylallyl diphosphate (DMAPP). Acts in the terminal step of the DOXP/MEP pathway for isoprenoid precursor biosynthesis. The protein is 4-hydroxy-3-methylbut-2-enyl diphosphate reductase of Chlorobium phaeobacteroides (strain DSM 266 / SMG 266 / 2430).